Reading from the N-terminus, the 329-residue chain is Mitochondrial substrate carrier family protein W (329 aa).

Over 1-39 (MTTNNSNDNNKRYGIIKQQLQQQQQQHHQQHEQHSRLVE) the chain is Mitochondrial intermembrane. 3 Solcar repeats span residues 34–119 (HSRL…CKEL), 133–221 (ESPL…FKSI), and 231–321 (LGIV…IKKF). The chain crosses the membrane as a helical span at residues 40-60 (MTAGCGAGFMASLFTTPLDVI). At 61–90 (KTTLQVDNSSNKTIMSTVKSILDRKGGVKN) the chain is on the mitochondrial matrix side. A helical transmembrane segment spans residues 91–111 (LYLGLKPTLVGQIPSWAVYFS). The Mitochondrial intermembrane portion of the chain corresponds to 112-135 (TYTFCKELFTKENDKHSLLEKESP). Residues 136-156 (LIFMTSAIIAGAATSICTSPI) form a helical membrane-spanning segment. At 157–193 (WLIKTRFITQEMVGRQKKYRGIVHSMVSIYHEEGFRG) the chain is on the mitochondrial matrix side. Residues 194–214 (LYKGLGPSLLGVLHVGVQFPL) form a helical membrane-spanning segment. At 215-230 (YEKFKSILKEKNKNKE) the chain is on the mitochondrial intermembrane side. A helical membrane pass occupies residues 231–251 (LGIVEIMIASSVSKIIASVVA). Residues 252–296 (YPHEVLRARSQDSSPDSPNRTYRGNIIQMFKQIVREEGWRGLYRG) lie on the Mitochondrial matrix side of the membrane. A helical transmembrane segment spans residues 297-315 (MGVNLLRVTPSCVITFTSY). At 316–329 (EYIKKFLSQNQNHF) the chain is on the mitochondrial intermembrane side.

This sequence belongs to the mitochondrial carrier (TC 2.A.29) family.

The protein localises to the mitochondrion inner membrane. Functionally, mitochondrial solute carriers shuttle metabolites, nucleotides, and cofactors through the mitochondrial inner membrane. In Dictyostelium discoideum (Social amoeba), this protein is Mitochondrial substrate carrier family protein W (mcfW).